The sequence spans 152 residues: Small ribosomal subunit protein uS13 (152 aa).

S41 is modified (phosphoserine).

This sequence belongs to the universal ribosomal protein uS13 family.

Its subcellular location is the cytoplasm. Its function is as follows. Located at the top of the head of the 40S subunit, it contacts several helices of the 18S rRNA. This chain is Small ribosomal subunit protein uS13 (RpS18), found in Drosophila melanogaster (Fruit fly).